Here is a 370-residue protein sequence, read N- to C-terminus: Phosphate-binding protein PstS 2 (370 aa).

The N-terminal stretch at 1–22 (MKFARSGAAVSLLAAGTLVLTA) is a signal peptide. A lipid anchor (N-palmitoyl cysteine) is attached at Cys23. The S-diacylglycerol cysteine moiety is linked to residue Cys23. Residues 54-56 (STA), Ser84, Asp102, and 191-193 (SGT) each bind phosphate.

This sequence belongs to the PstS family. The complex is composed of two ATP-binding proteins (PstB), two transmembrane proteins (PstC and PstA) and a solute-binding protein (PstS).

The protein localises to the cell membrane. Functions in inorganic phosphate uptake, although probably not the main uptake protein under phosphate starvation. Part of the ABC transporter complex PstSACB involved in phosphate import. The polypeptide is Phosphate-binding protein PstS 2 (pstS2) (Mycobacterium tuberculosis (strain ATCC 25618 / H37Rv)).